The primary structure comprises 156 residues: Transcription antitermination protein NusB (156 aa).

This sequence belongs to the NusB family.

Functionally, involved in transcription antitermination. Required for transcription of ribosomal RNA (rRNA) genes. Binds specifically to the boxA antiterminator sequence of the ribosomal RNA (rrn) operons. The chain is Transcription antitermination protein NusB from Bartonella quintana (strain Toulouse) (Rochalimaea quintana).